The chain runs to 569 residues: 2-succinyl-5-enolpyruvyl-6-hydroxy-3-cyclohexene-1-carboxylate synthase (569 aa).

It belongs to the TPP enzyme family. MenD subfamily. In terms of assembly, homodimer. The cofactor is Mg(2+). Requires Mn(2+) as cofactor. Thiamine diphosphate is required as a cofactor.

The catalysed reaction is isochorismate + 2-oxoglutarate + H(+) = 5-enolpyruvoyl-6-hydroxy-2-succinyl-cyclohex-3-ene-1-carboxylate + CO2. It participates in quinol/quinone metabolism; 1,4-dihydroxy-2-naphthoate biosynthesis; 1,4-dihydroxy-2-naphthoate from chorismate: step 2/7. Its pathway is quinol/quinone metabolism; menaquinone biosynthesis. Functionally, catalyzes the thiamine diphosphate-dependent decarboxylation of 2-oxoglutarate and the subsequent addition of the resulting succinic semialdehyde-thiamine pyrophosphate anion to isochorismate to yield 2-succinyl-5-enolpyruvyl-6-hydroxy-3-cyclohexene-1-carboxylate (SEPHCHC). This is 2-succinyl-5-enolpyruvyl-6-hydroxy-3-cyclohexene-1-carboxylate synthase from Shewanella halifaxensis (strain HAW-EB4).